A 491-amino-acid chain; its full sequence is Nuatigenin 3-beta-glucosyltransferase (491 aa).

The active-site Proton acceptor is His20. His20 lines the an anthocyanidin pocket. Asp125 acts as the Charge relay in catalysis. The UDP-alpha-D-glucose site is built by Ala352, Gln354, His369, Trp372, Asn373, Ser374, and Glu377. Ala392 is a binding site for an anthocyanidin. Positions 393 and 394 each coordinate UDP-alpha-D-glucose.

It belongs to the UDP-glycosyltransferase family. In terms of tissue distribution, expressed in roots, stems and leaves.

The catalysed reaction is nuatigenin + UDP-alpha-D-glucose = nuatigenin 3-beta-D-glucopyranoside + UDP + H(+). It carries out the reaction diosgenin + UDP-alpha-D-glucose = diosgenin 3-O-beta-D-glucoside + UDP + H(+). The enzyme catalyses tigogenin + UDP-alpha-D-glucose = tigogenin 3-O-beta-D-glucopyranoside + UDP + H(+). It catalyses the reaction solasodine + UDP-alpha-D-glucose = solasodine 3-beta-D-glucoside + UDP + H(+). The catalysed reaction is solanidine + UDP-alpha-D-glucose = solanidine 3-O-beta-D-glucopyranoside + UDP + H(+). It carries out the reaction tomatidine + UDP-alpha-D-glucose = tomatidine 3-O-beta-D-glucopyranoside + UDP + H(+). Functionally, glucosyltransferase involved in steroid saponin biosynthesis. Catalyzes the 3-O-glucosylation of steroidal sapogenins, such as diosgenin, nuatigenin and tigogenin. Can glucosylate steroidal alkaloids, such as solanidine, solasodine and tomatidine. The protein is Nuatigenin 3-beta-glucosyltransferase of Solanum aculeatissimum (Dutch eggplant).